Reading from the N-terminus, the 432-residue chain is Adenylosuccinate synthetase (432 aa).

Residues 13 to 19 (GDEGKGK) and 41 to 43 (GHT) each bind GTP. The active-site Proton acceptor is the Asp14. The Mg(2+) site is built by Asp14 and Gly41. IMP-binding positions include 14-17 (DEGK), 39-42 (NAGH), Thr130, Arg144, Gln225, Thr240, and Arg304. The active-site Proton donor is His42. 300–306 (ATTGRRR) serves as a coordination point for substrate. GTP-binding positions include Arg306, 332-334 (KLD), and 415-417 (STG).

This sequence belongs to the adenylosuccinate synthetase family. As to quaternary structure, homodimer. It depends on Mg(2+) as a cofactor.

The protein localises to the cytoplasm. The catalysed reaction is IMP + L-aspartate + GTP = N(6)-(1,2-dicarboxyethyl)-AMP + GDP + phosphate + 2 H(+). It participates in purine metabolism; AMP biosynthesis via de novo pathway; AMP from IMP: step 1/2. Plays an important role in the de novo pathway of purine nucleotide biosynthesis. Catalyzes the first committed step in the biosynthesis of AMP from IMP. The chain is Adenylosuccinate synthetase from Enterobacter sp. (strain 638).